A 140-amino-acid polypeptide reads, in one-letter code: Virion protein 5 (140 aa).

The protein resides in the virion. In Enterococcus faecalis (Streptococcus faecalis), this protein is Virion protein 5.